Reading from the N-terminus, the 192-residue chain is UPF0301 protein Bcep18194_A3962 (192 aa).

The protein belongs to the UPF0301 (AlgH) family.

The polypeptide is UPF0301 protein Bcep18194_A3962 (Burkholderia lata (strain ATCC 17760 / DSM 23089 / LMG 22485 / NCIMB 9086 / R18194 / 383)).